Reading from the N-terminus, the 307-residue chain is Ribosomal RNA small subunit methyltransferase H (307 aa).

Residues 32-34, Asp-52, Phe-78, Asp-100, and Gln-107 contribute to the S-adenosyl-L-methionine site; that span reads GGH.

This sequence belongs to the methyltransferase superfamily. RsmH family.

The protein resides in the cytoplasm. It carries out the reaction cytidine(1402) in 16S rRNA + S-adenosyl-L-methionine = N(4)-methylcytidine(1402) in 16S rRNA + S-adenosyl-L-homocysteine + H(+). Specifically methylates the N4 position of cytidine in position 1402 (C1402) of 16S rRNA. The polypeptide is Ribosomal RNA small subunit methyltransferase H (Coxiella burnetii (strain Dugway 5J108-111)).